The following is a 64-amino-acid chain: Large ribosomal subunit protein bL33 (64 aa).

The span at 16–25 (EARTSSEPRR) shows a compositional bias: basic and acidic residues. The tract at residues 16-39 (EARTSSEPRRSNGISRYTTEKNKR) is disordered.

It belongs to the bacterial ribosomal protein bL33 family.

This chain is Large ribosomal subunit protein bL33, found in Prochlorococcus marinus (strain MIT 9515).